The primary structure comprises 552 residues: Formate--tetrahydrofolate ligase (552 aa).

65–72 (TPAGEGKT) contacts ATP.

This sequence belongs to the formate--tetrahydrofolate ligase family.

The catalysed reaction is (6S)-5,6,7,8-tetrahydrofolate + formate + ATP = (6R)-10-formyltetrahydrofolate + ADP + phosphate. It participates in one-carbon metabolism; tetrahydrofolate interconversion. This is Formate--tetrahydrofolate ligase from Fervidobacterium nodosum (strain ATCC 35602 / DSM 5306 / Rt17-B1).